The chain runs to 682 residues: Potassium-transporting ATPase ATP-binding subunit (682 aa).

A run of 4 helical transmembrane segments spans residues Pro-34–Val-54, Ile-58–Phe-78, Ile-219–Leu-239, and Val-254–Ile-274. The 4-aspartylphosphate intermediate role is filled by Asp-307. Residues Asp-344, Glu-348, Phe-377 to Ser-384, and Lys-395 each bind ATP. The Mg(2+) site is built by Asp-518 and Asp-522. The next 3 membrane-spanning stretches (helical) occupy residues Phe-588–Met-608, Ala-616–Leu-636, and Leu-662–Ala-682.

The protein belongs to the cation transport ATPase (P-type) (TC 3.A.3) family. Type IA subfamily. As to quaternary structure, the system is composed of three essential subunits: KdpA, KdpB and KdpC.

Its subcellular location is the cell inner membrane. It carries out the reaction K(+)(out) + ATP + H2O = K(+)(in) + ADP + phosphate + H(+). Part of the high-affinity ATP-driven potassium transport (or Kdp) system, which catalyzes the hydrolysis of ATP coupled with the electrogenic transport of potassium into the cytoplasm. This subunit is responsible for energy coupling to the transport system and for the release of the potassium ions to the cytoplasm. The protein is Potassium-transporting ATPase ATP-binding subunit of Salmonella paratyphi A (strain ATCC 9150 / SARB42).